Here is a 255-residue protein sequence, read N- to C-terminus: PABIR family member 2 (255 aa).

The segment at 1-24 (MAQEKMDLDFEADTSEGATLRRSN) is disordered. Ala-2 carries the post-translational modification N-acetylalanine. A phosphoserine mark is found at Ser-25, Ser-33, Ser-50, and Ser-58. Phosphothreonine is present on Thr-112. Phosphoserine occurs at positions 115 and 119. Omega-N-methylarginine is present on Arg-122. Position 145 is a phosphoserine (Ser-145). Disordered stretches follow at residues 169–196 (LGPL…SMLS) and 219–238 (SGLS…SPVA). A compositionally biased stretch (basic and acidic residues) spans 174 to 184 (RKGEMEMESQP).

This sequence belongs to the FAM122 family.

The sequence is that of PABIR family member 2 from Mus musculus (Mouse).